The chain runs to 155 residues: FAD synthase (155 aa).

ATP contacts are provided by residues 9–10 (TF), 14–17 (HPGH), and aspartate 92.

Belongs to the archaeal FAD synthase family. As to quaternary structure, homodimer. Requires a divalent metal cation as cofactor.

It carries out the reaction FMN + ATP + H(+) = FAD + diphosphate. It participates in cofactor biosynthesis; FAD biosynthesis; FAD from FMN: step 1/1. In terms of biological role, catalyzes the transfer of the AMP portion of ATP to flavin mononucleotide (FMN) to produce flavin adenine dinucleotide (FAD) coenzyme. This Archaeoglobus profundus (strain DSM 5631 / JCM 9629 / NBRC 100127 / Av18) protein is FAD synthase.